The sequence spans 239 residues: Terpene cyclase idtB (239 aa).

Helical transmembrane passes span 20-40, 50-70, 75-95, 113-133, and 138-158; these read MADT…ALMI, CMAL…TIVY, RVEL…MVGA, AGFI…ALAM, and GLAY…GGLF. Asn-164 carries an N-linked (GlcNAc...) asparagine glycan. Residues 197–217 form a helical membrane-spanning segment; the sequence is EVFGWLASPLVLWSLVTFLLA.

Belongs to the paxB family.

It localises to the membrane. Its pathway is secondary metabolite biosynthesis. Terpene cyclase; part of the gene cluster that mediates the biosynthesis of paspalitrems, indole-diterpene (IDT) mycotoxins that are potent tremorgens in mammals. The geranylgeranyl diphosphate (GGPP) synthase idtG is proposed to catalyze the first step in IDT biosynthesis via catalysis of a series of iterative condensations of isopentenyl diphosphate (IPP) with dimethylallyl diphosphate (DMAPP), geranyl diphosphate (GPP), and farnesyl diphosphate (FPP), to form GGPP. Condensation of indole-3-glycerol phosphate with GGPP by the prenyltransferase idtC then forms 3-geranylgeranylindole (3-GGI). Epoxidation of the two terminal alkenes of the geranylgeranyl moiety by the FAD-dependent monooxygenase idtM, and cyclization by the terpene cyclase idtB then leads to the production of paspaline. The cytochrome P450 monooxygenase idtP then catalyzes oxidative elimination of the pendant methyl group at C-12 of paspaline and generates the C-10 ketone to yield 13-desoxypaxilline. The cytochrome P450 monooxygenase idtQ may catalyze the C-13 oxidation of 13-desoxypaxilline to afford paxilline. Considering that both paspalicine and paxilline were detected in C.paspali, idtQ also catalyzes the formation of paspalinine from 13-desoxypaxilline via paspalicine as an intermediate. Finally, the alpha-prenyltransferase idtF prenylates paspalinine at the C-20 or the C-21 positions to yield paspalitrems A and C, respectively. The hydroxylation of paspalitrem A at C-32 by a still unknown oxidase affords paspalitrem B. The chain is Terpene cyclase idtB from Claviceps paspali (Rye ergot fungus).